Here is a 21-residue protein sequence, read N- to C-terminus: Azemiopsin (21 aa).

Residues 1–14 show a composition bias toward pro residues; that stretch reads DNWWPKPPHQGPRP. The disordered stretch occupies residues 1–21; the sequence is DNWWPKPPHQGPRPPRPRPKP. Implicated in receptor binding stretches follow at residues 3–6, 8–11, and 13–14; these read WWPK, PHQG, and RP.

Monomer. Expressed by the venom gland.

The protein resides in the secreted. Its function is as follows. In vitro, reversibly blocks human muscle-type nicotinic acetylcholine receptors (nAChR) alpha-1-beta-1-epsilon-delta/CHRNA1-CHRNB1-CHRNE-CHRND (EC(50)=0.44 uM) and alpha-1-beta-1-gamma-delta/CHRNA1-CHRNB1-CHRNG-CHRND (EC(50)=1.56 uM). Binds to nAChR from T.californica (IC(50)=0.03-0.18 uM), human neuronal nAChR alpha-7/CHRNA7 (IC(50)=22 uM) and acetylcholine-binding proteins (AChBP) from L.stagnalis (IC(50)=63 uM) and A.californica (IC(50)=230 uM). The polypeptide is Azemiopsin (Azemiops feae (Fea's viper)).